The following is a 346-amino-acid chain: Holliday junction branch migration complex subunit RuvB (346 aa).

Residues 1 to 11 (MTEQRTIASSA) show a composition bias toward polar residues. A disordered region spans residues 1–20 (MTEQRTIASSATREDEAADA). Residues 1–183 (MTEQRTIASS…FGIVQRLEFY (183 aa)) are large ATPase domain (RuvB-L). ATP contacts are provided by residues isoleucine 22, arginine 23, glycine 64, lysine 67, threonine 68, threonine 69, 130 to 132 (EDF), arginine 173, tyrosine 183, and arginine 220. Threonine 68 contributes to the Mg(2+) binding site. The tract at residues 184-254 (SPQELTRIVI…VAQAAMQMLK (71 aa)) is small ATPAse domain (RuvB-S). The tract at residues 257 to 346 (PEGFDELDRR…PAIGEPGDLF (90 aa)) is head domain (RuvB-H). Arginine 293, arginine 312, and arginine 317 together coordinate DNA.

The protein belongs to the RuvB family. Homohexamer. Forms an RuvA(8)-RuvB(12)-Holliday junction (HJ) complex. HJ DNA is sandwiched between 2 RuvA tetramers; dsDNA enters through RuvA and exits via RuvB. An RuvB hexamer assembles on each DNA strand where it exits the tetramer. Each RuvB hexamer is contacted by two RuvA subunits (via domain III) on 2 adjacent RuvB subunits; this complex drives branch migration. In the full resolvosome a probable DNA-RuvA(4)-RuvB(12)-RuvC(2) complex forms which resolves the HJ.

It localises to the cytoplasm. The enzyme catalyses ATP + H2O = ADP + phosphate + H(+). Its function is as follows. The RuvA-RuvB-RuvC complex processes Holliday junction (HJ) DNA during genetic recombination and DNA repair, while the RuvA-RuvB complex plays an important role in the rescue of blocked DNA replication forks via replication fork reversal (RFR). RuvA specifically binds to HJ cruciform DNA, conferring on it an open structure. The RuvB hexamer acts as an ATP-dependent pump, pulling dsDNA into and through the RuvAB complex. RuvB forms 2 homohexamers on either side of HJ DNA bound by 1 or 2 RuvA tetramers; 4 subunits per hexamer contact DNA at a time. Coordinated motions by a converter formed by DNA-disengaged RuvB subunits stimulates ATP hydrolysis and nucleotide exchange. Immobilization of the converter enables RuvB to convert the ATP-contained energy into a lever motion, pulling 2 nucleotides of DNA out of the RuvA tetramer per ATP hydrolyzed, thus driving DNA branch migration. The RuvB motors rotate together with the DNA substrate, which together with the progressing nucleotide cycle form the mechanistic basis for DNA recombination by continuous HJ branch migration. Branch migration allows RuvC to scan DNA until it finds its consensus sequence, where it cleaves and resolves cruciform DNA. The sequence is that of Holliday junction branch migration complex subunit RuvB from Xanthomonas campestris pv. campestris (strain B100).